An 889-amino-acid polypeptide reads, in one-letter code: Alanine--tRNA ligase (889 aa).

Positions 574, 578, 682, and 686 each coordinate Zn(2+).

Belongs to the class-II aminoacyl-tRNA synthetase family. Requires Zn(2+) as cofactor.

The protein resides in the cytoplasm. It catalyses the reaction tRNA(Ala) + L-alanine + ATP = L-alanyl-tRNA(Ala) + AMP + diphosphate. Its function is as follows. Catalyzes the attachment of alanine to tRNA(Ala) in a two-step reaction: alanine is first activated by ATP to form Ala-AMP and then transferred to the acceptor end of tRNA(Ala). Also edits incorrectly charged Ser-tRNA(Ala) and Gly-tRNA(Ala) via its editing domain. The sequence is that of Alanine--tRNA ligase from Orientia tsutsugamushi (strain Ikeda) (Rickettsia tsutsugamushi).